A 369-amino-acid polypeptide reads, in one-letter code: L-lactate oxidase (369 aa).

An FMN hydroxy acid dehydrogenase domain is found at 13-369 (EKKLNVLNLD…KNAKLLNIRY (357 aa)). Residue Tyr39 coordinates pyruvate. FMN-binding positions include 92–94 (PAA), Ser121, and Gln143. Tyr145 is a pyruvate binding site. FMN is bound at residue Thr171. Position 180 (Arg180) interacts with pyruvate. Lys240 and Ser262 together coordinate FMN. His264 and Arg267 together coordinate pyruvate. His264 functions as the Proton acceptor in the catalytic mechanism. Residues 295–299 (DSGIR) and Arg319 contribute to the FMN site.

Belongs to the FMN-dependent alpha-hydroxy acid dehydrogenase family. As to quaternary structure, homotetramer. The cofactor is FMN.

It carries out the reaction (S)-lactate + O2 = pyruvate + H2O2. Functionally, catalyzes the oxidation of (S)-lactate (L-lactate) to pyruvate, with a reduction of O2 to H2O2. May be involved in the utilization of L-lactate as an energy source for growth. This Lentilactobacillus hilgardii (strain ATCC 8290 / DSM 20176 / CCUG 30140 / JCM 1155 / KCTC 3500 / NBRC 15886 / NCIMB 8040 / NRRL B-1843 / 9) protein is L-lactate oxidase.